A 104-amino-acid polypeptide reads, in one-letter code: UPF0145 protein TM1040_1243 (104 aa).

The protein belongs to the UPF0145 family.

This chain is UPF0145 protein TM1040_1243, found in Ruegeria sp. (strain TM1040) (Silicibacter sp.).